Reading from the N-terminus, the 529-residue chain is Zinc finger protein 572 (529 aa).

The segment at 1–62 (MEQEKKLLVS…EWSKRHRPQH (62 aa)) is disordered. Glycyl lysine isopeptide (Lys-Gly) (interchain with G-Cter in SUMO2) cross-links involve residues Lys-5 and Lys-6. A compositionally biased stretch (polar residues) spans 26 to 35 (TGDTSMNNLE). The span at 36–55 (TVHHNNSKADKLKEKPSEWS) shows a compositional bias: basic and acidic residues. 12 C2H2-type zinc fingers span residues 132-154 (YKCS…QRTH), 160-182 (YKCS…LRMH), 188-210 (YQCG…ERTH), 216-238 (YKCP…HRSH), 244-266 (YECS…QRTH), 272-294 (YKCP…QRTH), 300-322 (YKCL…QRIH), 328-350 (YQCP…QKMH), 384-406 (YRCC…QRTH), 412-434 (YRCS…QRTH), 440-462 (YKCP…RRTH), and 468-490 (YKCT…RKIH).

It belongs to the krueppel C2H2-type zinc-finger protein family.

Its subcellular location is the nucleus. May be involved in transcriptional regulation. This Homo sapiens (Human) protein is Zinc finger protein 572 (ZNF572).